Consider the following 89-residue polypeptide: UPF0223 protein BCE_4008 (89 aa).

It belongs to the UPF0223 family.

This is UPF0223 protein BCE_4008 from Bacillus cereus (strain ATCC 10987 / NRS 248).